Reading from the N-terminus, the 277-residue chain is Putative protein-disulfide oxidoreductase RC0029 (277 aa).

The N-terminal stretch at 1 to 22 (MRSIFIILIFLLFLSSCSEEKA) is a signal peptide. Residues 34–80 (EHETQNNETSKATNQEAVNSENTTESIVPANDNNQTDEVSTPASQKQ) are disordered. Polar residues predominate over residues 39 to 80 (NNETSKATNQEAVNSENTTESIVPANDNNQTDEVSTPASQKQ). The 190-residue stretch at 76 to 265 (ASQKQKNPAI…ISTAVDKALE (190 aa)) folds into the Thioredoxin domain. The cysteines at positions 118 and 121 are disulfide-linked.

The protein belongs to the thioredoxin family. DsbA subfamily.

It localises to the periplasm. Its function is as follows. May be required for disulfide bond formation in some proteins. The sequence is that of Putative protein-disulfide oxidoreductase RC0029 from Rickettsia conorii (strain ATCC VR-613 / Malish 7).